The sequence spans 533 residues: NEDD8-activating enzyme E1 regulatory subunit (533 aa).

The interval 330-343 (DMIADSDKFIKLQN) is interaction with uba3.

Belongs to the ubiquitin-activating E1 family. ULA1 subfamily. In terms of assembly, heterodimer of uba3 and nae1. The complex binds nedd8 and ube2m.

It participates in protein modification; protein neddylation. In terms of biological role, regulatory subunit of the dimeric uba3-nae1 E1 enzyme. E1 activates nedd8 by first adenylating its C-terminal glycine residue with ATP, thereafter linking this residue to the side chain of the catalytic cysteine, yielding a nedd8-uba3 thioester and free AMP. E1 finally transfers nedd8 to the catalytic cysteine of ube2m. The covalent attachment of nedd8 to target proteins is known as 'neddylation' and the process is involved in the regulation of cell growth, viability and development. This Xenopus laevis (African clawed frog) protein is NEDD8-activating enzyme E1 regulatory subunit (nae1).